The chain runs to 726 residues: Catalase-peroxidase (726 aa).

A disordered region spans residues M1 to S33. Positions W105 to Y226 form a cross-link, tryptophyl-tyrosyl-methioninium (Trp-Tyr) (with M-252). Residue H106 is the Proton acceptor of the active site. Residues Y226 to M252 constitute a cross-link (tryptophyl-tyrosyl-methioninium (Tyr-Met) (with W-105)). Residue H267 coordinates heme b.

Belongs to the peroxidase family. Peroxidase/catalase subfamily. Homodimer or homotetramer. Heme b is required as a cofactor. Formation of the three residue Trp-Tyr-Met cross-link is important for the catalase, but not the peroxidase activity of the enzyme.

The catalysed reaction is H2O2 + AH2 = A + 2 H2O. It catalyses the reaction 2 H2O2 = O2 + 2 H2O. Functionally, bifunctional enzyme with both catalase and broad-spectrum peroxidase activity. The polypeptide is Catalase-peroxidase (Salmonella paratyphi A (strain ATCC 9150 / SARB42)).